Here is a 235-residue protein sequence, read N- to C-terminus: Type III pantothenate kinase (235 aa).

6–13 (DVGNNYIK) is a binding site for ATP. Residues tyrosine 81 and 88 to 91 (GTDR) each bind substrate. Aspartate 90 serves as the catalytic Proton acceptor. Aspartate 111 contacts K(+). Position 114 (threonine 114) interacts with ATP. Threonine 166 lines the substrate pocket.

The protein belongs to the type III pantothenate kinase family. In terms of assembly, homodimer. Requires NH4(+) as cofactor. It depends on K(+) as a cofactor.

It localises to the cytoplasm. It catalyses the reaction (R)-pantothenate + ATP = (R)-4'-phosphopantothenate + ADP + H(+). Its pathway is cofactor biosynthesis; coenzyme A biosynthesis; CoA from (R)-pantothenate: step 1/5. In terms of biological role, catalyzes the phosphorylation of pantothenate (Pan), the first step in CoA biosynthesis. The sequence is that of Type III pantothenate kinase from Cytophaga hutchinsonii (strain ATCC 33406 / DSM 1761 / CIP 103989 / NBRC 15051 / NCIMB 9469 / D465).